Reading from the N-terminus, the 92-residue chain is MKVSTAAFAVLLTAAAFCTPASASPYASDTTPCCFAYLSHPLPLTHLQEYFYTSSKCSMPAVVFVTRRKRQVCANPQKKWVRDKGINSLEMN.

Residues 1–23 (MKVSTAAFAVLLTAAAFCTPASA) form the signal peptide. Intrachain disulfides connect C33-C57 and C34-C73.

The protein belongs to the intercrine beta (chemokine CC) family.

The protein resides in the secreted. Its function is as follows. Chemoattractant for blood monocytes, memory T-helper cells and eosinophils. Causes the release of histamine from basophils and activates eosinophils. May activate several chemokine receptors including CCR1, CCR3, CCR4 and CCR5. May also be an agonist of the G protein-coupled receptor GPR75. Together with GPR75, may play a role in neuron survival through activation of a downstream signaling pathway involving the PI3, Akt and MAP kinases. By activating GPR75 may also play a role in insulin secretion by islet cells. This chain is C-C motif chemokine 5 (CCL5), found in Felis catus (Cat).